The chain runs to 185 residues: Ribosome-recycling factor (185 aa).

This sequence belongs to the RRF family.

It is found in the cytoplasm. Responsible for the release of ribosomes from messenger RNA at the termination of protein biosynthesis. May increase the efficiency of translation by recycling ribosomes from one round of translation to another. The chain is Ribosome-recycling factor from Campylobacter jejuni (strain RM1221).